We begin with the raw amino-acid sequence, 461 residues long: FAD-dependent monooxygenase nodY2 (461 aa).

Residues Glu-48 and Arg-136 each contribute to the FAD site. Residue Arg-214 is part of the active site. 2 residues coordinate FAD: Asp-338 and Gly-351.

This sequence belongs to the paxM FAD-dependent monooxygenase family. FAD serves as cofactor.

It functions in the pathway secondary metabolite biosynthesis. FAD-dependent monooxygenase; part of the gene cluster that mediates the biosynthesis of the indole diterpenes nodulisporic acids (NA). Nodulisporic acid A (NAA) and its chemically modified derivatives are of particular significance because of their highly potent insecticidal activity against blood-feeding arthropods and lack of observable adverse effects on mammals, in particular the tremogenicity associated with the paspaline-derived IDTs is not observed. The geranylgeranyl diphosphate (GGPP) synthase ggs1, localized outside of the cluster, is proposed to catalyze the first step in nodulisporic acid biosynthesis via conversion of farnesyl pyrophosphate and isopentyl pyrophosphate into geranylgeranyl pyrophosphate (GGPP). Condensation of indole-3-glycerol phosphate with GGPP by the prenyl transferase nodC then forms 3-geranylgeranylindole (3-GGI). Epoxidation by the FAD-dependent monooxygenase nodM leads to a single-epoxidized-GGI that is substrate of the terpene cyclase nodB for cyclization to yield emindole SB. The terminal methyl carbon, C28, of emindole SB is then oxidized by the cytochrome P450 monooxygenase nodW to produce nodulisporic acid F (NAF), the pentacyclic core of NAA. NAF is converted to nodulisporic acid E (NAE) via prenylation. This step is probably performed by one of the indole diterpene prenyltransferases nodD1 or nodD2. Several oxidation steps performed by the FAD-linked oxidoreductase nodO and one of the cytochrome P450 monooxygenase nodR, nodX or nodZ further convert NAE to nodulisporic acid D (NAD). NAD is substrate of cytochrome P450 monooxygenase nodJ to produce the precursor of nodulisporic acid C (NAC), converted to NAC by one of the indole diterpene prenyltransferases nodD1 or nodD2. The FAD-dependent monooxygenase nodY2 then oxidizes NAC to nodulisporic acid B (NAB). Finally NAB is converted to NAA by one of the cytochrome P450 monooxygenases nodR, nodX or nodZ. The protein is FAD-dependent monooxygenase nodY2 of Hypoxylon pulicicidum.